A 282-amino-acid chain; its full sequence is Acetyl-coenzyme A carboxylase carboxyl transferase subunit beta 1 (282 aa).

The CoA carboxyltransferase N-terminal domain occupies 23 to 282; that stretch reads LMTKCPECRH…MHTKGGVQHV (260 aa). Residues C27, C30, C46, and C49 each coordinate Zn(2+). The segment at 27–49 adopts a C4-type zinc-finger fold; that stretch reads CPECRHILLTKELEKNHKVCTKC.

Belongs to the AccD/PCCB family. As to quaternary structure, acetyl-CoA carboxylase is a heterohexamer composed of biotin carboxyl carrier protein (AccB), biotin carboxylase (AccC) and two subunits each of ACCase subunit alpha (AccA) and ACCase subunit beta (AccD). Zn(2+) is required as a cofactor.

The protein resides in the cytoplasm. The enzyme catalyses N(6)-carboxybiotinyl-L-lysyl-[protein] + acetyl-CoA = N(6)-biotinyl-L-lysyl-[protein] + malonyl-CoA. It participates in lipid metabolism; malonyl-CoA biosynthesis; malonyl-CoA from acetyl-CoA: step 1/1. In terms of biological role, component of the acetyl coenzyme A carboxylase (ACC) complex. Biotin carboxylase (BC) catalyzes the carboxylation of biotin on its carrier protein (BCCP) and then the CO(2) group is transferred by the transcarboxylase to acetyl-CoA to form malonyl-CoA. The polypeptide is Acetyl-coenzyme A carboxylase carboxyl transferase subunit beta 1 (Lysinibacillus sphaericus (strain C3-41)).